Here is a 278-residue protein sequence, read N- to C-terminus: Large ribosomal subunit protein uL2 (278 aa).

A compositionally biased stretch (basic residues) spans 212–221 (NRWLGKRPHN). The disordered stretch occupies residues 212 to 278 (NRWLGKRPHN…ILSSRHNRKK (67 aa)).

It belongs to the universal ribosomal protein uL2 family. In terms of assembly, part of the 50S ribosomal subunit. Forms a bridge to the 30S subunit in the 70S ribosome.

In terms of biological role, one of the primary rRNA binding proteins. Required for association of the 30S and 50S subunits to form the 70S ribosome, for tRNA binding and peptide bond formation. It has been suggested to have peptidyltransferase activity; this is somewhat controversial. Makes several contacts with the 16S rRNA in the 70S ribosome. This is Large ribosomal subunit protein uL2 from Methylorubrum populi (strain ATCC BAA-705 / NCIMB 13946 / BJ001) (Methylobacterium populi).